We begin with the raw amino-acid sequence, 335 residues long: UPF0353 protein BCG_1543 (335 aa).

The next 2 membrane-spanning stretches (helical) occupy residues 18-38 and 67-87; these read WFFL…LMQL and VPAI…AGPT. The 197-residue stretch at 98–294 folds into the VWFA domain; it reads VVMLVIDVSQ…AELRAVYSSL (197 aa). Residues 309–329 traverse the membrane as a helical segment; sequence VGWLRLGALALALAALAALLI.

Belongs to the UPF0353 family.

Its subcellular location is the cell membrane. This chain is UPF0353 protein BCG_1543, found in Mycobacterium bovis (strain BCG / Pasteur 1173P2).